The chain runs to 256 residues: Sec-independent protein translocase protein TatC (256 aa).

Helical transmembrane passes span 25-45 (VICVVLVFVALVYFSNDIYHF), 77-97 (AIVAIFISVPYLLYQIWAFIA), 117-137 (ILFYCGVAFAYYIVFPLVFSF), 158-178 (FALALFLAFGVCFEVPIAIIL), 195-215 (PYIIVAAFFIGMLLTPPDVFS), and 217-237 (TLLAIPMCLLFELGLLVARFY).

This sequence belongs to the TatC family. The Tat system comprises two distinct complexes: a TatABC complex, containing multiple copies of TatA, TatB and TatC subunits, and a separate TatA complex, containing only TatA subunits. Substrates initially bind to the TatABC complex, which probably triggers association of the separate TatA complex to form the active translocon.

The protein resides in the cell inner membrane. Its function is as follows. Part of the twin-arginine translocation (Tat) system that transports large folded proteins containing a characteristic twin-arginine motif in their signal peptide across membranes. Together with TatB, TatC is part of a receptor directly interacting with Tat signal peptides. In Haemophilus influenzae (strain ATCC 51907 / DSM 11121 / KW20 / Rd), this protein is Sec-independent protein translocase protein TatC.